We begin with the raw amino-acid sequence, 165 residues long: Large ribosomal subunit protein uL10 (165 aa).

It belongs to the universal ribosomal protein uL10 family. In terms of assembly, part of the ribosomal stalk of the 50S ribosomal subunit. The N-terminus interacts with L11 and the large rRNA to form the base of the stalk. The C-terminus forms an elongated spine to which L12 dimers bind in a sequential fashion forming a multimeric L10(L12)X complex.

Forms part of the ribosomal stalk, playing a central role in the interaction of the ribosome with GTP-bound translation factors. This is Large ribosomal subunit protein uL10 from Burkholderia thailandensis (strain ATCC 700388 / DSM 13276 / CCUG 48851 / CIP 106301 / E264).